The primary structure comprises 445 residues: CBL-interacting serine/threonine-protein kinase 5 (445 aa).

The Protein kinase domain occupies 12–267 (YEMGRLLGKG…IPAIMRTPWL (256 aa)). ATP is bound by residues 18–26 (LGKGTFAKV) and Lys41. The Proton acceptor role is filled by Asp135. The activation loop stretch occupies residues 153–182 (DFGLSALPEQILQDGLLHTQCGTPAYVAPE). Ser157 carries the post-translational modification Phosphoserine. Thr171 carries the phosphothreonine modification. The region spanning 307–332 (ISPKFFNAFEFISSMSSGFDLSSLFE) is the NAF domain. A PPI region spans residues 336-366 (KVQSVFTSRSSATEVMEKIETVTKEMNMKVK).

It belongs to the protein kinase superfamily. CAMK Ser/Thr protein kinase family. SNF1 subfamily. Mn(2+) serves as cofactor.

The catalysed reaction is L-seryl-[protein] + ATP = O-phospho-L-seryl-[protein] + ADP + H(+). The enzyme catalyses L-threonyl-[protein] + ATP = O-phospho-L-threonyl-[protein] + ADP + H(+). Functionally, CIPK serine-threonine protein kinases interact with CBL proteins. Binding of a CBL protein to the regulatory NAF domain of CIPK protein lead to the activation of the kinase in a calcium-dependent manner. The sequence is that of CBL-interacting serine/threonine-protein kinase 5 (CIPK5) from Arabidopsis thaliana (Mouse-ear cress).